The following is a 187-amino-acid chain: High affinity copper uptake protein 1 (187 aa).

The Extracellular segment spans residues 1–65; the sequence is MRMNHMEMHH…SSLVINTPGE (65 aa). The short motif at 9-10 is the Bis-His motif element; it reads HH. N-linked (GlcNAc...) asparagine glycosylation is present at Asn-19. Thr-30 is a glycosylation site (O-linked (GalNAc...) threonine). The helical transmembrane segment at 66 to 86 threads the bilayer; the sequence is MAGAFVAVFLLAMFYEGLKIA. The Cytoplasmic segment spans residues 87 to 129; that stretch reads REGLLRKSQVSIRYNSMPVPGPNGTILMETHKTVGQQMLSFPH. The residue at position 111 (Thr-111) is a Phosphothreonine. Residues 130–150 traverse the membrane as a helical segment; sequence LLQTVLHIIQVVISYFLMLIF. Topologically, residues 151–153 are extracellular; that stretch reads MTY. A helical transmembrane segment spans residues 154–174; sequence NGYLCIAVAAGAGTGYFLFSW. Over 175-187 the chain is Cytoplasmic; it reads KKAVVVDITEHCH. Position 186 is a cysteine sulfenic acid (-SOH) (Cys-186).

It belongs to the copper transporter (Ctr) (TC 1.A.56) family. SLC31A subfamily. In terms of assembly, homotrimer; is stabilized by cisplatin via interactions between cisplatin and the methionine-rich clusters, and could be crucial for the copper(2+) reduction process and copper(1+) stabilization. Heterotrimer between SLC31A1, CCS and SOD1; this heterotrimer is copper(1+)-mediated and its maintenance is regulated through SOD1 activation. Interacts with KDR; this interaction is induced upon VEGFA stimulation leading to SLC31A1 and KDR subsequent co-internalization to early endosomes, thereby activating KDR downstream signaling in endothelial cells. Interacts (via C-terminal domain) with ATOX1 (via dimer form); this interaction improves ATOX1 stability and controls intracellular copper(1+) levels. Interacts with SLC31A2; this interaction stabilizes SLC31A2 and protects its from ubiquitination and degradation. Interacts (via C-terminal domain) with CCS; this interaction is copper(1+)-mediated. In terms of processing, O-Glycosylation at Thr-30 protects from proteolytic cleavage in the N-terminal extracellular domain. Proteolytic cleavage, leading to a truncated form, is facilitated by SLC31A2 and initiated preferentially by CTSL and to a minor extend by CTSB in endolysosomal compartments. A post-CTSL/cathepsin L processing occurs to yield to the fully truncated form. Post-translationally, sulfenylated at Cys-186 after stimulation with VEGFA, which induces SLC31A1-KDR disulfide bond formation and their co-internalization to early endosomes, driving to a sustained VEGFR2 signaling.

Its subcellular location is the cell membrane. The protein localises to the early endosome membrane. It localises to the recycling endosome membrane. It is found in the apical cell membrane. The protein resides in the late endosome membrane. Its subcellular location is the basolateral cell membrane. The enzyme catalyses Cu(+)(out) = Cu(+)(in). It catalyses the reaction Ag(+)(out) = Ag(+)(in). Copper uptake is inhibited by cold temperature, silver and zinc ions. Platinum-containing chemotherapeutic agents uptake is inhibited by cold temperature and copper. Functionally, uniporter that mediates the transport of copper(1+) from the extracellular space to the cytoplasm, across the plasma membrane. Then, delivers directly copper(1+) to specific chaperone such as ATOX1, via a copper(1+)- mediated transient interaction between the C-terminal domain and a copper(1+) chaperone, thus controlling intracellular copper(1+) levels. May function in copper(1+) import from the apical membrane thus may drive intestinal copper absorption. The copper(1+) transport mechanism is sodium-independent, saturable and of high-affinity. Also mediates the uptake of silver(1+). May function in the influx of the platinum-containing chemotherapeutic agents. The platinum-containing chemotherapeutic agents uptake is saturable. Also participates in the first step of copper(2+) acquisition by cells through a direct transfer of copper(2+) from copper(2+) carriers in blood, such as ALB to the N-terminal domain of SLC31A1, leading to copper(2+) reduction and probably followed by copper(1+) stabilization. In addition, functions as a redox sensor to promote angiogenesis in endothelial cells, in a copper(1+) transport independent manner, by transmitting the VEGF-induced ROS signal through a sulfenylation at Cys-189 leading to a subsequent disulfide bond formation between SLC31A1 and KDR. The SLC31A1-KDR complex is then co-internalized to early endosomes, driving a sustained VEGFR2 signaling. Mobilizes copper(1+) out of the endosomal compartment, making copper(1+) available for export out of the cells. This chain is High affinity copper uptake protein 1, found in Rattus norvegicus (Rat).